The following is a 68-amino-acid chain: Large ribosomal subunit protein bL33c (68 aa).

It belongs to the bacterial ribosomal protein bL33 family.

The protein resides in the plastid. The polypeptide is Large ribosomal subunit protein bL33c (Cuscuta reflexa (Southern Asian dodder)).